An 83-amino-acid polypeptide reads, in one-letter code: Protein midgut expression 1 (83 aa).

In terms of tissue distribution, endoderm-specific pattern of expression during embryogenesis; anterior and posterior midgut primordia.

Involved in morphogenesis and development. This Drosophila melanogaster (Fruit fly) protein is Protein midgut expression 1 (mex1).